Consider the following 310-residue polypeptide: Putative integrase/recombinase y4rE (310 aa).

The Core-binding (CB) domain maps to 6 to 83 (RFLGEKVERY…VLRRFYEYLA (78 aa)). Residues 104–301 (PPPRILSEAE…SVDLLAMAAE (198 aa)) enclose the Tyr recombinase domain. Residues arginine 148, lysine 173, histidine 245, arginine 248, and histidine 279 contribute to the active site. Residue tyrosine 288 is the O-(3'-phospho-DNA)-tyrosine intermediate of the active site.

This sequence belongs to the 'phage' integrase family.

In Sinorhizobium fredii (strain NBRC 101917 / NGR234), this protein is Putative integrase/recombinase y4rE.